The primary structure comprises 244 residues: MAGHSKWHNIQARKSVQDAKKSKFFTKVTKELMLAARAGGADTALNQRLKSAIAAAKAVNLPKDKIDQAIKKGTGELAGENLEEVLYEGYGPGGVAILVEAATDNRNRTVAEVRHLLSKGGGAMGESGCVSWMFSQKGVFSFPKTFTEDQLMEVGLEHGAEEIMDEGEVWEVHCAPADFEPLRAAFEAAGMVSEDAEVAMVPANMVALDLEAGQKLLKLIDMLEDNEDVQKVHSNADLPDEMFG.

It belongs to the TACO1 family.

Its subcellular location is the cytoplasm. This Solidesulfovibrio magneticus (strain ATCC 700980 / DSM 13731 / RS-1) (Desulfovibrio magneticus) protein is Probable transcriptional regulatory protein DMR_30850.